Here is a 928-residue protein sequence, read N- to C-terminus: Nuclear pore complex-interacting protein family member B12 (928 aa).

The helical transmembrane segment at 73–93 (VVITLWIVYLWVSLLKTIFWS) threads the bilayer. Disordered stretches follow at residues 242–452 (RMGH…NIKT) and 663–928 (ERLR…RRLS). Residues 252–263 (QQHSITDNSLSL) are compositionally biased toward polar residues. The segment covering 349 to 359 (PLPPSAPPSAP) has biased composition (pro residues). Composition is skewed to basic and acidic residues over residues 406–416 (DNIKTPAERLR), 698–708 (DNIKTPAERLR), 740–750 (DNIKTPAERLR), and 782–792 (DNIKTPAERLR).

It belongs to the NPIP family.

It is found in the membrane. In Homo sapiens (Human), this protein is Nuclear pore complex-interacting protein family member B12.